A 442-amino-acid chain; its full sequence is MFS transporter asaE (442 aa).

The segment covering 1 to 10 has biased composition (polar residues); it reads MDRSRTSSQG. Positions 1-43 are disordered; it reads MDRSRTSSQGRDVLPPRGDEGRISPSLDKEKSPGPEDQPDAPP. Residues 17–34 are compositionally biased toward basic and acidic residues; it reads RGDEGRISPSLDKEKSPG. 12 helical membrane passes run 47-67, 89-109, 119-139, 150-170, 177-197, 206-226, 252-272, 288-307, 319-339, 342-362, 381-401, and 413-433; these read LTAW…FGWV, TISW…PIVG, YLII…SIST, ICSA…VSAW, IAFA…PIMV, FGWS…IAIV, PVFI…FIPI, LASY…RLGA, IFIV…IPAT, APII…VSLS, LLFL…GAIL, and IFSG…RIVG.

It belongs to the major facilitator superfamily. Monocarboxylate porter (TC 2.A.1.13) family.

It is found in the cell membrane. It functions in the pathway secondary metabolite biosynthesis. Its function is as follows. MFS transporter; part of the gene cluster that mediates the biosynthesis of aspergillic acid. Probably involved in aspergillic acid metabolism and transport. The chain is MFS transporter asaE from Aspergillus flavus (strain ATCC 200026 / FGSC A1120 / IAM 13836 / NRRL 3357 / JCM 12722 / SRRC 167).